The primary structure comprises 349 residues: MPMPPDDSALSLLPDHPLAAHNTFGIDATARFAARVTHAAQFAALHRDPRVAHLSQLVLGGGSNVVFTRDFDGVVLLDEIAGRRVVREDDDAWYVEAGGGETWHAFVAWTLEHGMPGLENLALIPGTVGAAPIQNIGAYGLEMKTYFDSLVAVELATGRSERFDAARCAFGYRDSFFKREGRGRFAIVAVTFRLPKRWTPRLGYADVTRELDARGIAPDAATPRDVFDAVVAIRRAKLPDPLELGNAGSFFKNPVIDAAQFDALRARVPDVVSYPQPGGQVKLAAGWLIDRCGWKGRTLGAAAVHDRQALVLVNRGGATGADVLALARAIQDDVRKQFGVELEPEPVCV.

The 174-residue stretch at Phe24–Arg197 folds into the FAD-binding PCMH-type domain. Arg173 is a catalytic residue. Residue Ser249 is the Proton donor of the active site. Residue Glu345 is part of the active site.

It belongs to the MurB family. FAD is required as a cofactor.

The protein resides in the cytoplasm. It carries out the reaction UDP-N-acetyl-alpha-D-muramate + NADP(+) = UDP-N-acetyl-3-O-(1-carboxyvinyl)-alpha-D-glucosamine + NADPH + H(+). It functions in the pathway cell wall biogenesis; peptidoglycan biosynthesis. Cell wall formation. In Burkholderia ambifaria (strain MC40-6), this protein is UDP-N-acetylenolpyruvoylglucosamine reductase.